A 416-amino-acid polypeptide reads, in one-letter code: NADH-quinone oxidoreductase subunit D (416 aa).

The protein belongs to the complex I 49 kDa subunit family. As to quaternary structure, NDH-1 is composed of 14 different subunits. Subunits NuoB, C, D, E, F, and G constitute the peripheral sector of the complex.

The protein localises to the cell inner membrane. It carries out the reaction a quinone + NADH + 5 H(+)(in) = a quinol + NAD(+) + 4 H(+)(out). Its function is as follows. NDH-1 shuttles electrons from NADH, via FMN and iron-sulfur (Fe-S) centers, to quinones in the respiratory chain. The immediate electron acceptor for the enzyme in this species is believed to be ubiquinone. Couples the redox reaction to proton translocation (for every two electrons transferred, four hydrogen ions are translocated across the cytoplasmic membrane), and thus conserves the redox energy in a proton gradient. In Rhodopseudomonas palustris (strain BisB5), this protein is NADH-quinone oxidoreductase subunit D.